A 288-amino-acid chain; its full sequence is Elongation factor Ts (288 aa).

An involved in Mg(2+) ion dislocation from EF-Tu region spans residues 82 to 85; that stretch reads TDFV.

This sequence belongs to the EF-Ts family.

The protein resides in the cytoplasm. In terms of biological role, associates with the EF-Tu.GDP complex and induces the exchange of GDP to GTP. It remains bound to the aminoacyl-tRNA.EF-Tu.GTP complex up to the GTP hydrolysis stage on the ribosome. This is Elongation factor Ts from Chlorobium luteolum (strain DSM 273 / BCRC 81028 / 2530) (Pelodictyon luteolum).